A 140-amino-acid polypeptide reads, in one-letter code: Arsenate-mycothiol transferase ArsC1 (140 aa).

This sequence belongs to the low molecular weight phosphotyrosine protein phosphatase family.

It is found in the cytoplasm. It carries out the reaction mycothiol + arsenate = arseno-mycothiol + H2O. Involved in defense against toxic arsenate. Involved in the mycothiol/myoredoxin redox pathway which uses a mycothioltransferase mechanism; facilitates adduct formation between arsenate and mycothiol. The polypeptide is Arsenate-mycothiol transferase ArsC1 (arsC1) (Corynebacterium glutamicum (strain ATCC 13032 / K051)).